The primary structure comprises 908 residues: NADH-quinone oxidoreductase subunit G (908 aa).

One can recognise a 2Fe-2S ferredoxin-type domain in the interval 2–83; the sequence is ATIHVDGKEY…GTFISIDDEE (82 aa). [2Fe-2S] cluster contacts are provided by Cys34, Cys45, Cys48, and Cys67. The 40-residue stretch at 83–122 folds into the 4Fe-4S His(Cys)3-ligated-type domain; that stretch reads EAKQFRESVVEWLMTNHPHDCPVCEEGGNCHLQDMTVMTG. The [4Fe-4S] cluster site is built by His99, Cys103, Cys106, Cys112, Cys151, Cys154, Cys157, Cys201, Cys228, Cys231, Cys235, and Cys263. Residues 221 to 277 enclose the 4Fe-4S Mo/W bis-MGD-type domain; it reads MQFAPSICQQCSIGCNISPGERYGELRRIENRYNGTVNHYFLCDRGRFGYGYVNLKD.

The protein belongs to the complex I 75 kDa subunit family. In terms of assembly, composed of 13 different subunits. Subunits NuoCD, E, F, and G constitute the peripheral sector of the complex. Requires [2Fe-2S] cluster as cofactor. [4Fe-4S] cluster serves as cofactor.

It carries out the reaction a quinone + NADH + 5 H(+)(in) = a quinol + NAD(+) + 4 H(+)(out). NDH-1 shuttles electrons from NADH, via FMN and iron-sulfur (Fe-S) centers, to quinones in the respiratory chain. The immediate electron acceptor for the enzyme in this species is believed to be ubiquinone. Couples the redox reaction to proton translocation (for every two electrons transferred, four hydrogen ions are translocated across the cytoplasmic membrane), and thus conserves the redox energy in a proton gradient. The chain is NADH-quinone oxidoreductase subunit G (nuoG) from Escherichia coli O6:H1 (strain CFT073 / ATCC 700928 / UPEC).